Here is a 73-residue protein sequence, read N- to C-terminus: MQIKHLITIFFLVLIVADHCHAFLGMIPGLIGGLISAFKGRRKREITSQIEQYRNLQKREAELENLLANLPVY.

Residues 1–22 (MQIKHLITIFFLVLIVADHCHA) form the signal peptide. Position 39 is a lysine amide (K39). Positions 45–73 (EITSQIEQYRNLQKREAELENLLANLPVY) are excised as a propeptide.

Belongs to the non-disulfide-bridged peptide (NDBP) superfamily. Short antimicrobial peptide (group 4) family. As to expression, expressed by the venom gland.

It localises to the secreted. Antimicrobial peptide. Has a high antibacterial activity against the Gram-positive bacterium S.aureus (MIC=5-17.30 uM), the methicillin-resistant S.aureus (MRSA) (MIC=17.30 uM), and E.faecalis (MIC=69.23 uM). Has antifungal activity against Candida spp. and one Cryptococcus neoformans strains with MICs values ranging from 6.25 to 100 uM. Also shows an inhibitory activity on C.albicans biofilms at high concentrations. Has a moderate hemolytic potency (18% at 20 uM). Also inhibits the growth of the five human cancer cell lines tested (the squamous carcinoma cell line H157 (IC(50)=4.1 uM), the lung adenocarcinoma cell line H838 (11.0 uM), the breast carcinoma cell line MCF-7 (6.4 uM), the androgen-independent prostate adenocarcinoma cell line PC3 (13.3 uM) and the glioblastoma cell line U251-MG (15.4 uM)). In the model of polymicrobial sepsis, it exhibits an antibiotic effect, reducing the levels of microorganisms in the infectious focus and the inflammatory responses in the lung and cecum of septic animals. The chain is Antimicrobial peptide TsAP-2 from Tityus serrulatus (Brazilian scorpion).